The sequence spans 279 residues: uncharacterized protein (279 aa).

An HTH lysR-type domain is found at 14 to 71; sequence ITPNQIKLLIALHKTKSQNEAAKLLNIKPSSFNIQLKRLENKLGVKLYYSSPNGTVLT. Residues 31-50 constitute a DNA-binding region (H-T-H motif); the sequence is QNEAAKLLNIKPSSFNIQLK.

The protein belongs to the LysR transcriptional regulatory family.

This is an uncharacterized protein from Methanocaldococcus jannaschii (strain ATCC 43067 / DSM 2661 / JAL-1 / JCM 10045 / NBRC 100440) (Methanococcus jannaschii).